Reading from the N-terminus, the 610-residue chain is Glutamine--fructose-6-phosphate aminotransferase [isomerizing] (610 aa).

C2 (nucleophile; for GATase activity) is an active-site residue. The 220-residue stretch at 2 to 221 (CGIVGAVAQR…DGDVVDLQLA (220 aa)) folds into the Glutamine amidotransferase type-2 domain. SIS domains lie at 286 to 426 (AYKV…TRGR) and 459 to 600 (WADR…VDKP). K605 serves as the catalytic For Fru-6P isomerization activity.

Homodimer.

It is found in the cytoplasm. It carries out the reaction D-fructose 6-phosphate + L-glutamine = D-glucosamine 6-phosphate + L-glutamate. Catalyzes the first step in hexosamine metabolism, converting fructose-6P into glucosamine-6P using glutamine as a nitrogen source. This Bordetella bronchiseptica (strain ATCC BAA-588 / NCTC 13252 / RB50) (Alcaligenes bronchisepticus) protein is Glutamine--fructose-6-phosphate aminotransferase [isomerizing].